The primary structure comprises 177 residues: Anti-apoptotic protein NR13 (177 aa).

The BH1 motif lies at L75 to G94. Residues L86 to E106 form a helical membrane-spanning segment. Positions E126–F141 match the BH2 motif. The helical transmembrane segment at S156–V176 threads the bilayer.

Belongs to the Bcl-2 family. In terms of assembly, interacts with BAX. As to expression, expressed preferentially in heart, skeletal muscle, retina, optical tectum and bursa of Fabricius.

The protein localises to the cell membrane. In terms of biological role, shows anti-apoptotic properties. Counteract the pro-apoptotic activity of BAX. In Gallus gallus (Chicken), this protein is Anti-apoptotic protein NR13 (NR13).